A 474-amino-acid chain; its full sequence is Photosystem II CP43 reaction center protein (474 aa).

Positions 1 to 14 are excised as a propeptide; sequence MKTLYSLRRFYPVE. T15 is modified (N-acetylthreonine). Position 15 is a phosphothreonine (T15). Helical transmembrane passes span 69-93, 134-155, 178-201, 256-276, and 292-313; these read LFEVAHFVPEKPMYEQGLILLPHLA, LLGPETLEESFPFFGYVWKDRN, KALYFGGVYDTWAPGGGEMLRKIT, KPFAWARRALVWSGEAYLSYS, and WFNNTAYPSEFYGPTGPEASQA. Residue E368 coordinates [CaMn4O5] cluster. A helical membrane pass occupies residues 448–472; it reads RARAAAAGFEKGIDRDFEPVLSMTP.

This sequence belongs to the PsbB/PsbC family. PsbC subfamily. PSII is composed of 1 copy each of membrane proteins PsbA, PsbB, PsbC, PsbD, PsbE, PsbF, PsbH, PsbI, PsbJ, PsbK, PsbL, PsbM, PsbT, PsbX, PsbY, PsbZ, Psb30/Ycf12, at least 3 peripheral proteins of the oxygen-evolving complex and a large number of cofactors. It forms dimeric complexes. Binds multiple chlorophylls and provides some of the ligands for the Ca-4Mn-5O cluster of the oxygen-evolving complex. It may also provide a ligand for a Cl- that is required for oxygen evolution. PSII binds additional chlorophylls, carotenoids and specific lipids. is required as a cofactor.

The protein localises to the plastid. It is found in the chloroplast thylakoid membrane. Functionally, one of the components of the core complex of photosystem II (PSII). It binds chlorophyll and helps catalyze the primary light-induced photochemical processes of PSII. PSII is a light-driven water:plastoquinone oxidoreductase, using light energy to abstract electrons from H(2)O, generating O(2) and a proton gradient subsequently used for ATP formation. This chain is Photosystem II CP43 reaction center protein, found in Citrus sinensis (Sweet orange).